The following is a 483-amino-acid chain: tRNA-2-methylthio-N(6)-dimethylallyladenosine synthase (483 aa).

Positions 31-148 (KKLYIETQGC…LPQMLDQHHA (118 aa)) constitute an MTTase N-terminal domain. Cysteine 40, cysteine 77, cysteine 111, cysteine 192, cysteine 196, and cysteine 199 together coordinate [4Fe-4S] cluster. Positions 178–410 (RVEGFKAFVS…QQVIKQSSIE (233 aa)) constitute a Radical SAM core domain. One can recognise a TRAM domain in the interval 413–477 (DAMLGKIERV…LNLVYGELLN (65 aa)).

The protein belongs to the methylthiotransferase family. MiaB subfamily. In terms of assembly, monomer. It depends on [4Fe-4S] cluster as a cofactor.

The protein resides in the cytoplasm. It catalyses the reaction N(6)-dimethylallyladenosine(37) in tRNA + (sulfur carrier)-SH + AH2 + 2 S-adenosyl-L-methionine = 2-methylsulfanyl-N(6)-dimethylallyladenosine(37) in tRNA + (sulfur carrier)-H + 5'-deoxyadenosine + L-methionine + A + S-adenosyl-L-homocysteine + 2 H(+). Functionally, catalyzes the methylthiolation of N6-(dimethylallyl)adenosine (i(6)A), leading to the formation of 2-methylthio-N6-(dimethylallyl)adenosine (ms(2)i(6)A) at position 37 in tRNAs that read codons beginning with uridine. The sequence is that of tRNA-2-methylthio-N(6)-dimethylallyladenosine synthase from Acinetobacter baumannii (strain AB0057).